Reading from the N-terminus, the 144-residue chain is Sirohydrochlorin cobaltochelatase (144 aa).

H9 acts as the Proton acceptor in catalysis. H9 contacts Co(2+). H9 is a Ni(2+) binding site. Substrate contacts are provided by residues E45 and 70 to 75 (LAPGNH). H75 is a Co(2+) binding site. H75 contacts Ni(2+). Residues 89 to 112 (GDDEGGHHHHHDHEHHHHHHDTTA) are disordered. Residues 95-108 (HHHHHDHEHHHHHH) are compositionally biased toward basic residues.

This sequence belongs to the CbiX family. CbiXS subfamily. As to quaternary structure, homotetramer; dimer of dimers.

The enzyme catalyses Co-sirohydrochlorin + 2 H(+) = sirohydrochlorin + Co(2+). The catalysed reaction is Ni-sirohydrochlorin + 2 H(+) = sirohydrochlorin + Ni(2+). The protein operates within cofactor biosynthesis; adenosylcobalamin biosynthesis; cob(II)yrinate a,c-diamide from sirohydrochlorin (anaerobic route): step 1/10. In terms of biological role, catalyzes the insertion of Co(2+) into sirohydrochlorin as part of the anaerobic pathway to cobalamin biosynthesis. Involved in the biosynthesis of the unique nickel-containing tetrapyrrole coenzyme F430, the prosthetic group of methyl-coenzyme M reductase (MCR), which plays a key role in methanogenesis and anaerobic methane oxidation. Catalyzes the insertion of Ni(2+) into sirohydrochlorin to yield Ni-sirohydrochlorin. This Methanococcus maripaludis (strain DSM 14266 / JCM 13030 / NBRC 101832 / S2 / LL) protein is Sirohydrochlorin cobaltochelatase.